The following is a 39-amino-acid chain: Natriuretic peptide TcNPa (39 aa).

A propeptide spanning residues Ser1–Ile8 is cleaved from the precursor. Cys12 and Cys28 are disulfide-bonded. The O-linked (GalNAc...) threonine glycan is linked to Thr35.

This sequence belongs to the natriuretic peptide family. In terms of processing, O-linked glycans consist of galactosyl-beta(1-3)-N-acetylgalactosamine (Gal-GalNAc). Post-translationally, the synthetic non-glycosylated form shows higher potency on natriuretic receptors (EC(50)=672.90 nM) and NPR2 (EC(50)=261.0 nM). Expressed by the venom gland.

It localises to the secreted. Snake venom natriuretic peptide that targets both NPR1 (EC(50)=1080.0 nM) and NPR2 (EC(50)=328.60 nM). Exhibits hypotensive and vasodepressor activities. The protein is Natriuretic peptide TcNPa of Tropidechis carinatus (Australian rough-scaled snake).